The following is a 192-amino-acid chain: Ion-translocating oxidoreductase complex subunit B (192 aa).

The segment at 1-26 (MTAIWIAIAALSALALAFGLVLGYAS) is hydrophobic. Residues 32–91 (ENDPIVEEVEAMLPQSQCGQCGYPGCRPYAEAVSLNGESINKCGPGGEAMMLKLAEKLNV) form the 4Fe-4S domain. [4Fe-4S] cluster-binding residues include cysteine 49, cysteine 52, cysteine 57, cysteine 74, cysteine 117, cysteine 120, cysteine 123, cysteine 127, cysteine 147, cysteine 150, cysteine 153, and cysteine 157. 4Fe-4S ferredoxin-type domains follow at residues 108 to 137 (HVAWIDESNCIGCTKCIQACPVDAIIGSTK) and 138 to 167 (AVHTVVSDLCTGCDLCISPCPTDCIELRPI).

The protein belongs to the 4Fe4S bacterial-type ferredoxin family. RnfB subfamily. In terms of assembly, the complex is composed of six subunits: RnfA, RnfB, RnfC, RnfD, RnfE and RnfG. [4Fe-4S] cluster is required as a cofactor.

It localises to the cell inner membrane. Part of a membrane-bound complex that couples electron transfer with translocation of ions across the membrane. This Pectobacterium atrosepticum (strain SCRI 1043 / ATCC BAA-672) (Erwinia carotovora subsp. atroseptica) protein is Ion-translocating oxidoreductase complex subunit B.